Reading from the N-terminus, the 554-residue chain is (+)-delta-cadinene synthase isozyme XC14 (554 aa).

Residues 1–16 (MASQVSQMPSSSPLSS) are compositionally biased toward low complexity. The segment at 1 to 23 (MASQVSQMPSSSPLSSNKDEMRP) is disordered. Positions 307, 311, and 451 each coordinate Mg(2+). The DDXXD motif signature appears at 307–311 (DDTYD).

It belongs to the terpene synthase family. The cofactor is Mg(2+).

The enzyme catalyses (2E,6E)-farnesyl diphosphate = (1S,8aR)-delta-cadinene + diphosphate. It functions in the pathway secondary metabolite biosynthesis; terpenoid biosynthesis. Responsible for the cyclization of trans,trans-farnesyl diphosphate (FPP) to (+)-delta cadinene. This chain is (+)-delta-cadinene synthase isozyme XC14, found in Gossypium arboreum (Tree cotton).